The sequence spans 102 residues: uncharacterized protein (102 aa).

Residues 1–43 are disordered; the sequence is MNNAHEENISSVTGFKSTSGSPAIGSSLPGRSGEGRSSSSSSG. Over residues 9–21 the composition is skewed to polar residues; that stretch reads ISSVTGFKSTSGS. Residues 25 to 43 are compositionally biased toward low complexity; it reads GSSLPGRSGEGRSSSSSSG.

This is an uncharacterized protein from Saccharomyces cerevisiae (strain ATCC 204508 / S288c) (Baker's yeast).